Reading from the N-terminus, the 132-residue chain is Phosphoribosyl-AMP cyclohydrolase (132 aa).

Asp-79 is a Mg(2+) binding site. Cys-80 provides a ligand contact to Zn(2+). Mg(2+) contacts are provided by Asp-81 and Asp-83. Zn(2+) is bound by residues Cys-100 and Cys-107.

This sequence belongs to the PRA-CH family. As to quaternary structure, homodimer. Mg(2+) is required as a cofactor. Requires Zn(2+) as cofactor.

It is found in the cytoplasm. It catalyses the reaction 1-(5-phospho-beta-D-ribosyl)-5'-AMP + H2O = 1-(5-phospho-beta-D-ribosyl)-5-[(5-phospho-beta-D-ribosylamino)methylideneamino]imidazole-4-carboxamide. It participates in amino-acid biosynthesis; L-histidine biosynthesis; L-histidine from 5-phospho-alpha-D-ribose 1-diphosphate: step 3/9. In terms of biological role, catalyzes the hydrolysis of the adenine ring of phosphoribosyl-AMP. The protein is Phosphoribosyl-AMP cyclohydrolase of Delftia acidovorans (strain DSM 14801 / SPH-1).